Reading from the N-terminus, the 175-residue chain is Protein FanH (175 aa).

The N-terminal stretch at 1-20 (MIKKVPVLLFFMASISITHA) is a signal peptide. Cys-39 and Cys-77 are disulfide-bonded.

It is found in the fimbrium. In terms of biological role, involved in the biosynthesis of K99 fimbriae. The sequence is that of Protein FanH (fanH) from Escherichia coli.